We begin with the raw amino-acid sequence, 283 residues long: MCNTPTYCDLGKAAKDVFNKGYGFGMVKIDLKTKSCSGVEFSTSGHAYTDTGKASGNLETKYKVCNYGLTFTQKWNTDNTLGTEISWENKLAEGLKLTLDTIFVPNTGKKSGKLKASYKRDCFSVGSNVDIDFSGPTIYGWAVLAFEGWLAGYQMSFDTAKSKLSQNNFALGYKAADFQLHTHVNDGTEFGGSIYQKVNEKIETSINLAWTAGSNNTRFGIAAKYMLDCRTSLSAKVNNASLIGLGYTQTLRPGVKLTLSALIDGKNFSAGGHKVGLGFELEA.

An N-acetylcysteine modification is found at Cys2. Thr4 carries the post-translational modification Phosphothreonine. Lys12, Lys15, and Lys20 each carry N6-acetyllysine. Beta stranded transmembrane passes span 26–35 and 39–47; these read MVKIDLKTKS and VEFSTSGHA. Glycyl lysine isopeptide (Lys-Gly) (interchain with G-Cter in ubiquitin) cross-links involve residues Lys53 and Lys61. 3 beta stranded membrane passes run 54 to 64, 69 to 76, and 80 to 89; these read ASGNLETKYKV, LTFTQKWN, and TLGTEISWEN. At Lys90 the chain carries N6-acetyllysine. The beta stranded transmembrane segment at 95–104 threads the bilayer; that stretch reads LKLTLDTIFV. Residues Lys109 and Lys110 each participate in a glycyl lysine isopeptide (Lys-Gly) (interchain with G-Cter in ubiquitin) cross-link. A run of 10 beta stranded transmembrane segments spans residues 111 to 120, 123 to 130, 137 to 145, 150 to 158, 163 to 175, 178 to 185, 189 to 198, 202 to 211, 218 to 227, and 231 to 238; these read SGKLKASYKR, FSVGSNVD, TIYGWAVLA, LAGYQMSFD, KLSQNNFALGYKA, FQLHTHVN, EFGGSIYQKV, IETSINLAWT, RFGIAAKYML, and TSLSAKVN. Residue Lys163 forms a Glycyl lysine isopeptide (Lys-Gly) (interchain with G-Cter in ubiquitin) linkage. Ser241 bears the Phosphoserine mark. Residues 242-244 and 260-264 each bind NAD(+); these read LIG and SALID. The next 2 membrane-spanning stretches (beta stranded) occupy residues 242–251 and 254–263; these read LIGLGYTQTL and GVKLTLSALI. Lys266 is subject to N6-acetyllysine; alternate. A Glycyl lysine isopeptide (Lys-Gly) (interchain with G-Cter in ubiquitin); alternate cross-link involves residue Lys266. Residues 273 to 282 traverse the membrane as a beta stranded segment; that stretch reads HKVGLGFELE. Lys274 is covalently cross-linked (Glycyl lysine isopeptide (Lys-Gly) (interchain with G-Cter in ubiquitin)).

This sequence belongs to the eukaryotic mitochondrial porin family. In terms of assembly, interacts with ARMC12 in a TBC1D21-dependent manner. Interacts with MISFA. Post-translationally, ubiquitinated by PRKN during mitophagy, leading to its degradation and enhancement of mitophagy. Deubiquitinated by USP30. Expressed in erythrocytes (at protein level). Widely expressed. Highest in testis.

The protein localises to the mitochondrion outer membrane. Its subcellular location is the membrane. It catalyses the reaction chloride(in) = chloride(out). The enzyme catalyses K(+)(in) = K(+)(out). In terms of biological role, non-selective voltage-gated ion channel that mediates the transport of anions and cations through the mitochondrion outer membrane and plasma membrane. Forms a high-conducting channel with a stable open state and a voltage-induced closure with a mild preference for anions over cations. Involved in male fertility and sperm mitochondrial sheath formation. The chain is Non-selective voltage-gated ion channel VDAC3 from Homo sapiens (Human).